Reading from the N-terminus, the 189-residue chain is MARKKKTRRVSDIMPARKVDKKVELPKGKQGKKLTRYELDAKAREDKKKKKRKGLASGSRHSATENNNNHQALAKKDPRLGSRKKVPLIVEFVNKPEKGMTIPPMKVEEKVAKLDPMLELEQLENNECLNQLLDALDAGKTLSAEDQQFVDDCLDRIAQLMDELGISEDDDPEEDLLRTFEKIDINQFR.

Residues 1 to 81 (MARKKKTRRV…ALAKKDPRLG (81 aa)) are disordered. Composition is skewed to basic and acidic residues over residues 9–27 (RVSD…ELPK) and 35–46 (TRYELDAKARED). Over residues 60–71 (RHSATENNNNHQ) the composition is skewed to polar residues.

Belongs to the YihI family. As to quaternary structure, interacts with Der.

A GTPase-activating protein (GAP) that modifies Der/EngA GTPase function. May play a role in ribosome biogenesis. The chain is Der GTPase-activating protein YihI from Pasteurella multocida (strain Pm70).